Here is a 348-residue protein sequence, read N- to C-terminus: D-alanine--D-alanine ligase (348 aa).

In terms of domain architecture, ATP-grasp spans 132–334; the sequence is KRVLESIGIP…YPDLIEELVT (203 aa). 162-217 is an ATP binding site; it reads LARLTFPIFVKPANMGSSVGISKAQTKVELRKAIQLALTYDSRVLIEQGVVAREIE. Residues Asp-288, Glu-301, and Asn-303 each coordinate Mg(2+).

This sequence belongs to the D-alanine--D-alanine ligase family. It depends on Mg(2+) as a cofactor. Mn(2+) serves as cofactor.

It localises to the cytoplasm. It carries out the reaction 2 D-alanine + ATP = D-alanyl-D-alanine + ADP + phosphate + H(+). Its pathway is cell wall biogenesis; peptidoglycan biosynthesis. Functionally, cell wall formation. This is D-alanine--D-alanine ligase from Streptococcus pyogenes serotype M18 (strain MGAS8232).